The primary structure comprises 1059 residues: Tyrosine-protein kinase-like otk (1059 aa).

The signal sequence occupies residues 1–23 (MDMLMMWSICLFVCIFMAPFSCG). The Extracellular portion of the chain corresponds to 24 to 597 (SGSSSRFIQV…GDGGFLATRA (574 aa)). 5 consecutive Ig-like C2-type domains span residues 28–112 (SRFI…REAS), 113–202 (PTAK…RVMS), 258–377 (PEGL…LAIN), 380–475 (PGIL…VSIN), and 480–570 (PKFS…AVLT). An N-linked (GlcNAc...) asparagine glycan is attached at Asn42. Cystine bridges form between Cys49–Cys99, Cys141–Cys191, Cys283–Cys366, and Cys411–Cys459. Asn348, Asn429, Asn441, Asn456, Asn469, Asn524, and Asn536 each carry an N-linked (GlcNAc...) asparagine glycan. Cysteines 502 and 554 form a disulfide. A helical membrane pass occupies residues 598–618 (VLITMTVALAYIVLVVGLMLW). Topologically, residues 619–1059 (CRYRRQARKA…ALSKAMQNSE (441 aa)) are cytoplasmic. Residues 639 to 695 (GGEQAGGEGSTSGNPKASEQEPCLGKQQRNGRNGKSKSNGDPQKSDDTACSQQSRAS) form a disordered region. Residues 665-693 (QQRNGRNGKSKSNGDPQKSDDTACSQQSR) are compositionally biased toward polar residues. Ser698 is subject to Phosphoserine. A Protein kinase; inactive domain is found at 712 to 1055 (LSELIQIGRG…QLGAALSKAM (344 aa)). The tract at residues 739–781 (AQANDKDSDNDKQHSNSENGSGGSSGSTTLSTLNEKRRSKTSM) is disordered. The segment covering 742–753 (NDKDSDNDKQHS) has biased composition (basic and acidic residues).

Belongs to the protein kinase superfamily. Tyr protein kinase family. Insulin receptor subfamily. As to quaternary structure, interacts with plexA; component of a receptor complex that mediates the repulsive signaling in response to Semaphorin ligands.

Its subcellular location is the cell membrane. Acts as a calcium-dependent, homophilic cell adhesion molecule that regulates neural recognition during the development of the nervous system. Component of the repulsive Plexin signaling response to regulate motor axon guidance at the embryonic stage. Also component of a receptor complex that is required in the adult visual system to innervate the lamina layer; specific targeting of R1-R6 axons. The protein is Tyrosine-protein kinase-like otk of Drosophila willistoni (Fruit fly).